A 267-amino-acid polypeptide reads, in one-letter code: MVKISFQPAVAGIKGDKADKASASAPAPASATEILLTPAREEQLPQHRSKRGSSVGGVCYLSMGMVVLLMGLVFASVYIYRYFFLAQLARDNFFRCGVLYEDSLSSQVRTQMELEEDVKIYLDENYERINVPVPQFGGGDPADIIHDFQRGLTAYHDISLDKCYVIELNTTIVLPPRNFWELLMNVKRGTYLPQTYIIQEEMVVTEHVSDKEALGSFIYHLCNGKDTYRLRRRATRRRINKRGAKNCNAIRHFENTFVVETLICGVV.

Thr37 is modified (phosphothreonine). Residues 55-75 (VGGVCYLSMGMVVLLMGLVFA) traverse the membrane as a helical; Signal-anchor for type II membrane protein segment. In terms of domain architecture, BRICHOS spans 136–230 (FGGGDPADII…LCNGKDTYRL (95 aa)). A disulfide bridge connects residues Cys163 and Cys222. Asn169 carries an N-linked (GlcNAc...) asparagine glycan.

It belongs to the ITM2 family. As to quaternary structure, interacts with BACE1. Interacts with APP. Interacts with STMN2. Post-translationally, type I membrane-bound, as well as soluble, furin has a pre-eminent role in ITM2C proteolytic processing. PCSK7 and PCSK5 may also be involved although to a lesser extent. The soluble form of PCSK7 is incapable of processing ITM2C. Fails to undergo shedding by ADAM10 and intramembrane cleavage by SPPL2B.

The protein resides in the lysosome membrane. Its subcellular location is the cell membrane. Its function is as follows. Negative regulator of amyloid-beta peptide production. May inhibit the processing of APP by blocking its access to alpha- and beta-secretase. Binding to the beta-secretase-cleaved APP C-terminal fragment is negligible, suggesting that ITM2C is a poor gamma-secretase cleavage inhibitor. May play a role in TNF-induced cell death and neuronal differentiation. The chain is Integral membrane protein 2C (ITM2C) from Pongo abelii (Sumatran orangutan).